A 217-amino-acid polypeptide reads, in one-letter code: Membrane-associated progesterone receptor component 2 (217 aa).

O-linked (Xyl...) (chondroitin sulfate) serine glycosylation occurs at serine 15. The chain crosses the membrane as a helical span at residues 40–62 (ALLATGGEMLLNVALVALVLLGA). 3 positions are modified to phosphoserine: serine 84, serine 98, and serine 202. Residues 96-195 (DFSLEQLRQY…EKYDYVGRLL (100 aa)) form the Cytochrome b5 heme-binding domain. A disordered region spans residues 196-217 (KPGEEPSEYTDEEDTKDHSKQD). A compositionally biased stretch (acidic residues) spans 200-209 (EPSEYTDEED). The residue at position 204 (tyrosine 204) is a Phosphotyrosine. The residue at position 205 (threonine 205) is a Phosphothreonine.

Belongs to the cytochrome b5 family. MAPR subfamily. As to quaternary structure, interacts with PGRMC1. Interacts with AAAS.

Its subcellular location is the membrane. The protein resides in the nucleus envelope. It is found in the endoplasmic reticulum. The protein localises to the secreted. Its function is as follows. Required for the maintenance of uterine histoarchitecture and normal female reproductive lifespan. May serve as a universal non-classical progesterone receptor in the uterus. Intracellular heme chaperone required for delivery of labile, or signaling heme, to the nucleus. Plays a role in adipocyte function and systemic glucose homeostasis. In brown fat, which has a high demand for heme, delivery of labile heme in the nucleus regulates the activity of heme-responsive transcriptional repressors such as NR1D1 and BACH1. The polypeptide is Membrane-associated progesterone receptor component 2 (Rattus norvegicus (Rat)).